A 74-amino-acid polypeptide reads, in one-letter code: Protein WFDC9 (74 aa).

An N-terminal signal peptide occupies residues 1–19; the sequence is MKFWILLLTVSAHGIVVFL.

Its subcellular location is the secreted. The sequence is that of Protein WFDC9 (Wfdc9) from Rattus norvegicus (Rat).